The sequence spans 434 residues: Pre-B-cell leukemia transcription factor 3 (434 aa).

The segment at 20 to 41 (SVQGGMALPPPPHGHEGADGDG) is disordered. Positions 32 to 41 (HGHEGADGDG) are enriched in basic and acidic residues. One can recognise a PBC domain in the interval 41–234 (GRKQDIGDIL…VMILRSRFLD (194 aa)). The tract at residues 48–127 (DILHQIMTIT…EGVSGPEKGG (80 aa)) is PBC-A. The PBC-B stretch occupies residues 130–234 (AAAAAAAAAS…VMILRSRFLD (105 aa)). Positions 235-297 (ARRKRRNFSK…NKRIRYKKNI (63 aa)) form a DNA-binding region, homeobox; TALE-type. A compositionally biased stretch (low complexity) spans 326–341 (NQTNSPTTPNSGSSGS). Disordered stretches follow at residues 326–349 (NQTNSPTTPNSGSSGSFNLPNSGD) and 405–434 (ANGGWQDATTPSSVTSPTEGPGSVHSDTSN). The segment covering 405–422 (ANGGWQDATTPSSVTSPT) has biased composition (polar residues).

Belongs to the TALE/PBX homeobox family. In terms of assembly, interacts with PBXIP1.

It localises to the nucleus. Transcriptional activator that binds the sequence 5'-ATCAATCAA-3'. The polypeptide is Pre-B-cell leukemia transcription factor 3 (Pbx3) (Mus musculus (Mouse)).